A 271-amino-acid chain; its full sequence is Cobalt import ATP-binding protein CbiO (271 aa).

The 235-residue stretch at 2–236 folds into the ABC transporter domain; that stretch reads LATSDLWFRY…TEAMEHAGLT (235 aa). 34–41 is a binding site for ATP; it reads GANGCGKS.

The protein belongs to the ABC transporter superfamily. Cobalt importer (TC 3.A.1.18.1) family. As to quaternary structure, forms an energy-coupling factor (ECF) transporter complex composed of an ATP-binding protein (A component, CbiO), a transmembrane protein (T component, CbiQ) and 2 possible substrate-capture proteins (S components, CbiM and CbiN) of unknown stoichimetry.

The protein localises to the cell inner membrane. It functions in the pathway cofactor biosynthesis; adenosylcobalamin biosynthesis. Functionally, part of the energy-coupling factor (ECF) transporter complex CbiMNOQ involved in cobalt import. Presumably responsible for energy coupling to the transport system. The sequence is that of Cobalt import ATP-binding protein CbiO from Salmonella typhi.